Consider the following 448-residue polypeptide: tRNA-2-methylthio-N(6)-dimethylallyladenosine synthase (448 aa).

Residues 2–119 (KKLYIKTFGC…LSDLIAKRRE (118 aa)) form the MTTase N-terminal domain. C11, C48, C82, C156, C160, and C163 together coordinate [4Fe-4S] cluster. One can recognise a Radical SAM core domain in the interval 142 to 377 (RQTRGSAYVS…LVESQANQIS (236 aa)). The TRAM domain occupies 378 to 444 (QKMLGNIERV…NYTLRGKLVE (67 aa)).

Belongs to the methylthiotransferase family. MiaB subfamily. As to quaternary structure, monomer. [4Fe-4S] cluster serves as cofactor.

Its subcellular location is the cytoplasm. It carries out the reaction N(6)-dimethylallyladenosine(37) in tRNA + (sulfur carrier)-SH + AH2 + 2 S-adenosyl-L-methionine = 2-methylsulfanyl-N(6)-dimethylallyladenosine(37) in tRNA + (sulfur carrier)-H + 5'-deoxyadenosine + L-methionine + A + S-adenosyl-L-homocysteine + 2 H(+). Functionally, catalyzes the methylthiolation of N6-(dimethylallyl)adenosine (i(6)A), leading to the formation of 2-methylthio-N6-(dimethylallyl)adenosine (ms(2)i(6)A) at position 37 in tRNAs that read codons beginning with uridine. The polypeptide is tRNA-2-methylthio-N(6)-dimethylallyladenosine synthase (Polynucleobacter necessarius subsp. necessarius (strain STIR1)).